The chain runs to 471 residues: U1 small nuclear ribonucleoprotein 70 kDa (471 aa).

The tract at residues phenylalanine 48–arginine 78 is disordered. The segment covering alanine 60–arginine 78 has biased composition (basic and acidic residues). Positions histidine 92 to glycine 202 are required for interaction with U1 RNA. The region spanning lysine 103–valine 184 is the RRM domain. The interval tryptophan 187–glutamate 471 is disordered. The span at leucine 192–arginine 201 shows a compositional bias: gly residues. Over residues asparagine 207–arginine 245 the composition is skewed to basic and acidic residues. Basic residues predominate over residues arginine 246–serine 259. The segment covering arginine 260–arginine 293 has biased composition (basic and acidic residues). Residues aspartate 294 to glutamate 303 show a composition bias toward basic residues. 2 stretches are compositionally biased toward basic and acidic residues: residues arginine 304–glycine 321 and isoleucine 344–proline 428.

In terms of assembly, component of the U1 snRNP. The U1 snRNP is composed of the U1 snRNA and the 7 core Sm proteins snrpb, snrpd1, snrpd2, snrpd3, snrpe, snrpf and snrpg that assemble in a heptameric protein ring on the Sm site of the small nuclear RNA to form the core snRNP, and at least three U1 snRNP-specific proteins snrnp70/U1-70K, snrpa/U1-A and snrpc/U1-C.

It is found in the nucleus speckle. Its subcellular location is the nucleus. It localises to the nucleoplasm. Its function is as follows. Component of the spliceosomal U1 snRNP, which is essential for recognition of the pre-mRNA 5' splice-site and the subsequent assembly of the spliceosome. snrnp70 binds to the loop I region of U1-snRNA. This Xenopus tropicalis (Western clawed frog) protein is U1 small nuclear ribonucleoprotein 70 kDa (snrnp70).